A 704-amino-acid chain; its full sequence is Protein NBR1 homolog (704 aa).

Methionine 1 is subject to N-acetylmethionine. Residues 7-92 (ALVVKVSYGG…KFLKINVNAG (86 aa)) form the PB1 domain. 3 stretches are compositionally biased toward polar residues: residues 95–108 (TNSA…SSTP), 171–189 (PQES…SGAS), and 223–233 (HSKTSGHVPNS). Disordered stretches follow at residues 95–114 (TNSA…MPNP) and 171–233 (PQES…VPNS). Residues 286–336 (HKGIRCDGCGVLPITGPRFKSKVKEDYDLCTICYSVMGNEGDYTRMDKPVS) form a ZZ-type; degenerate zinc finger. Cysteine 291, cysteine 294, cysteine 315, and cysteine 318 together coordinate Zn(2+). The UBA domain occupies 657–701 (GVSEWDPILEELQEMGFCDDVTNKRLLKKNNGSIKGVVMDLLTGE). The LIR signature appears at 661 to 664 (WDPI).

Homodimer. Interacts with ATG8A, ATG8B, ATG8C, ATG8D, ATG8F and ATG8I. Binds to ubiquitin.

It is found in the cytoplasm. The protein localises to the vacuole. Its function is as follows. Autophagic substrate degraded in the vacuole by non-selective autophagy. Requires ATG8 protein expression to be recognized as an autophagic substrate. Acts probably as a receptor for autophagosomal degradation of ubiquitinated proteins. Targets ubiquitinated protein aggregates derived from denatured or damaged non-native proteins generated under stress conditions. Functions additively with the E3 ubiquitin-protein ligase CHIP for autophagosomal degradation of proteotoxic aggregates formed under stress conditions. The chain is Protein NBR1 homolog from Arabidopsis thaliana (Mouse-ear cress).